A 261-amino-acid polypeptide reads, in one-letter code: Cytochrome c oxidase subunit 3 (261 aa).

The Mitochondrial matrix portion of the chain corresponds to 1–15; the sequence is MTHQTHAYHMVNPSP. A helical membrane pass occupies residues 16-34; the sequence is WPLTGALSALLMTSGLIMW. Residues 35–40 are Mitochondrial intermembrane-facing; it reads FHFNST. The helical transmembrane segment at 41-66 threads the bilayer; the sequence is ALLMLGLTTNMLTMYQWWRDIVREST. The Mitochondrial matrix portion of the chain corresponds to 67 to 72; sequence FQGHHT. A helical membrane pass occupies residues 73–105; it reads PTVQKGLRYGMILFIISEVLFFTGFFWAFYHSS. The Mitochondrial intermembrane portion of the chain corresponds to 106 to 128; it reads LAPTPELGGCWPPTGIHPLNPLE. A helical membrane pass occupies residues 129–152; it reads VPLLNTSVLLASGVSITWAHHSLM. Over 153–155 the chain is Mitochondrial matrix; that stretch reads EGN. A helical membrane pass occupies residues 156-183; the sequence is RNHMLQALFITIALGVYFTLLQASEYYE. The Mitochondrial intermembrane portion of the chain corresponds to 184–190; it reads APFTISD. Residues 191–223 form a helical membrane-spanning segment; the sequence is GVYGSTFFVATGFHGLHVIIGSTFLIVCFFRQL. The Mitochondrial matrix segment spans residues 224-232; the sequence is KFHFTSNHH. A helical membrane pass occupies residues 233-256; that stretch reads FGFEAAAWYWHFVDVVWLFLYVSI. Topologically, residues 257–261 are mitochondrial intermembrane; that stretch reads YWWGS.

Belongs to the cytochrome c oxidase subunit 3 family. Component of the cytochrome c oxidase (complex IV, CIV), a multisubunit enzyme composed of 14 subunits. The complex is composed of a catalytic core of 3 subunits MT-CO1, MT-CO2 and MT-CO3, encoded in the mitochondrial DNA, and 11 supernumerary subunits COX4I, COX5A, COX5B, COX6A, COX6B, COX6C, COX7A, COX7B, COX7C, COX8 and NDUFA4, which are encoded in the nuclear genome. The complex exists as a monomer or a dimer and forms supercomplexes (SCs) in the inner mitochondrial membrane with NADH-ubiquinone oxidoreductase (complex I, CI) and ubiquinol-cytochrome c oxidoreductase (cytochrome b-c1 complex, complex III, CIII), resulting in different assemblies (supercomplex SCI(1)III(2)IV(1) and megacomplex MCI(2)III(2)IV(2)).

The protein resides in the mitochondrion inner membrane. The catalysed reaction is 4 Fe(II)-[cytochrome c] + O2 + 8 H(+)(in) = 4 Fe(III)-[cytochrome c] + 2 H2O + 4 H(+)(out). Functionally, component of the cytochrome c oxidase, the last enzyme in the mitochondrial electron transport chain which drives oxidative phosphorylation. The respiratory chain contains 3 multisubunit complexes succinate dehydrogenase (complex II, CII), ubiquinol-cytochrome c oxidoreductase (cytochrome b-c1 complex, complex III, CIII) and cytochrome c oxidase (complex IV, CIV), that cooperate to transfer electrons derived from NADH and succinate to molecular oxygen, creating an electrochemical gradient over the inner membrane that drives transmembrane transport and the ATP synthase. Cytochrome c oxidase is the component of the respiratory chain that catalyzes the reduction of oxygen to water. Electrons originating from reduced cytochrome c in the intermembrane space (IMS) are transferred via the dinuclear copper A center (CU(A)) of subunit 2 and heme A of subunit 1 to the active site in subunit 1, a binuclear center (BNC) formed by heme A3 and copper B (CU(B)). The BNC reduces molecular oxygen to 2 water molecules using 4 electrons from cytochrome c in the IMS and 4 protons from the mitochondrial matrix. This is Cytochrome c oxidase subunit 3 (MT-CO3) from Cephalophorus natalensis (Natal red duiker).